The following is a 90-amino-acid chain: Probable Fe(2+)-trafficking protein (90 aa).

This sequence belongs to the Fe(2+)-trafficking protein family. In terms of assembly, monomer.

In terms of biological role, could be a mediator in iron transactions between iron acquisition and iron-requiring processes, such as synthesis and/or repair of Fe-S clusters in biosynthetic enzymes. The chain is Probable Fe(2+)-trafficking protein from Hamiltonella defensa subsp. Acyrthosiphon pisum (strain 5AT).